A 224-amino-acid chain; its full sequence is Phosphoribosylformylglycinamidine synthase subunit PurQ (224 aa).

In terms of domain architecture, Glutamine amidotransferase type-1 spans 2–224; sequence TVAIIRFGGS…DGQGVLEGFR (223 aa). C85 (nucleophile) is an active-site residue. Residues H202 and E204 contribute to the active site. The tract at residues 204–224 is disordered; it reads ERASLPDIGPTDGQGVLEGFR.

In terms of assembly, part of the FGAM synthase complex composed of 1 PurL, 1 PurQ and 2 PurS subunits.

It localises to the cytoplasm. It catalyses the reaction N(2)-formyl-N(1)-(5-phospho-beta-D-ribosyl)glycinamide + L-glutamine + ATP + H2O = 2-formamido-N(1)-(5-O-phospho-beta-D-ribosyl)acetamidine + L-glutamate + ADP + phosphate + H(+). It carries out the reaction L-glutamine + H2O = L-glutamate + NH4(+). It participates in purine metabolism; IMP biosynthesis via de novo pathway; 5-amino-1-(5-phospho-D-ribosyl)imidazole from N(2)-formyl-N(1)-(5-phospho-D-ribosyl)glycinamide: step 1/2. Its function is as follows. Part of the phosphoribosylformylglycinamidine synthase complex involved in the purines biosynthetic pathway. Catalyzes the ATP-dependent conversion of formylglycinamide ribonucleotide (FGAR) and glutamine to yield formylglycinamidine ribonucleotide (FGAM) and glutamate. The FGAM synthase complex is composed of three subunits. PurQ produces an ammonia molecule by converting glutamine to glutamate. PurL transfers the ammonia molecule to FGAR to form FGAM in an ATP-dependent manner. PurS interacts with PurQ and PurL and is thought to assist in the transfer of the ammonia molecule from PurQ to PurL. The protein is Phosphoribosylformylglycinamidine synthase subunit PurQ of Natronomonas pharaonis (strain ATCC 35678 / DSM 2160 / CIP 103997 / JCM 8858 / NBRC 14720 / NCIMB 2260 / Gabara) (Halobacterium pharaonis).